A 2179-amino-acid polypeptide reads, in one-letter code: Genome polyprotein (2179 aa).

4 disordered regions span residues 503–531 (FSKDGADHTPKIPKRNVVLPSGAKDPTGD), 623–678 (QPQK…YPIQ), 703–738 (RAKKKLQKDEVKQKTSLPPESKRPDPQSSSHLGDQF), and 753–847 (EPSV…PPKM). Composition is skewed to polar residues over residues 630–642 (DTPSYQSSYQPFH) and 659–678 (TTFANTPQPQPSLFSQYPIQ). Residues 758–770 (SEDTSSQSYISTE) show a composition bias toward polar residues. The span at 783–806 (SEESTQLSQLSSSSNDSPENNENT) shows a compositional bias: low complexity. Over residues 819-831 (EISEVEDEVDGMT) the composition is skewed to acidic residues. The CCHC-type zinc-finger motif lies at 1112 to 1125 (CFTCGKIGHFSRNC). Asp1226 acts as the For protease activity; shared with dimeric partner in catalysis. The Reverse transcriptase domain occupies 1409-1591 (QQFDLIEPSD…NKIQFLGMDF (183 aa)). The Mg(2+) site is built by Asp1479, Asp1542, and Asp1543. Disordered regions lie at residues 1822 to 1848 (QRRTRSSSTKSKADSSQSTGSSYKLSH), 2114 to 2144 (NIVKDSPRKRKGKAKSRSSTRSEKRRAKNKC), and 2160 to 2179 (YSTKPSTPSWTQDSSSEPCV). The segment covering 1827–1840 (SSSTKSKADSSQST) has biased composition (low complexity). Residues 2120–2144 (PRKRKGKAKSRSSTRSEKRRAKNKC) show a composition bias toward basic residues. A compositionally biased stretch (polar residues) spans 2162–2179 (TKPSTPSWTQDSSSEPCV).

This sequence belongs to the Petuviruses genome polyprotein family.

The catalysed reaction is DNA(n) + a 2'-deoxyribonucleoside 5'-triphosphate = DNA(n+1) + diphosphate. Encodes presumably for at least four polypeptides: Movement protein (MP), capsid protein (CP), Protease (PR), and reverse transcriptase (RT). The protein is Genome polyprotein of Petunia vein clearing virus (isolate Shepherd) (PVCV).